Reading from the N-terminus, the 528-residue chain is Probable cyclic di-GMP phosphodiesterase PdeC (528 aa).

Helical transmembrane passes span 14 to 34 (GIIFLVLFPIILSLWIAFLWA) and 242 to 262 (HLIFALPAGILGSLVLLLLWL). Positions 268–520 (YLSPKRKLQR…VFMQWMEQLP (253 aa)) constitute an EAL domain.

Its subcellular location is the cell inner membrane. The catalysed reaction is 3',3'-c-di-GMP + H2O = 5'-phosphoguanylyl(3'-&gt;5')guanosine + H(+). Phosphodiesterase (PDE) that catalyzes the hydrolysis of cyclic-di-GMP (c-di-GMP) to 5'-pGpG. Cyclic-di-GMP is a second messenger which controls cell surface-associated traits in bacteria. Overexpression reduces biofilm formation. This Escherichia coli (strain K12) protein is Probable cyclic di-GMP phosphodiesterase PdeC.